We begin with the raw amino-acid sequence, 159 residues long: MDATFWAFIALVIFVVIVVYMKVPGMIGRTLDERADRIKKELEEARTLREEAQQLLAEYHRKRKEAEKEAGDIVASAEREAKALLEEAKRATEEYVARRNKLAEQKIATAETDAINAVRASAVDLAVAAAGSILAEKVDAKAAGNLFNDALAQVKSHLN.

A helical transmembrane segment spans residues 1–21 (MDATFWAFIALVIFVVIVVYM).

The protein belongs to the ATPase B chain family. F-type ATPases have 2 components, F(1) - the catalytic core - and F(0) - the membrane proton channel. F(1) has five subunits: alpha(3), beta(3), gamma(1), delta(1), epsilon(1). F(0) has three main subunits: a(1), b(2) and c(10-14). The alpha and beta chains form an alternating ring which encloses part of the gamma chain. F(1) is attached to F(0) by a central stalk formed by the gamma and epsilon chains, while a peripheral stalk is formed by the delta and b chains.

The protein localises to the cell inner membrane. Functionally, f(1)F(0) ATP synthase produces ATP from ADP in the presence of a proton or sodium gradient. F-type ATPases consist of two structural domains, F(1) containing the extramembraneous catalytic core and F(0) containing the membrane proton channel, linked together by a central stalk and a peripheral stalk. During catalysis, ATP synthesis in the catalytic domain of F(1) is coupled via a rotary mechanism of the central stalk subunits to proton translocation. In terms of biological role, component of the F(0) channel, it forms part of the peripheral stalk, linking F(1) to F(0). This is ATP synthase subunit b 2 from Brucella canis (strain ATCC 23365 / NCTC 10854 / RM-666).